The sequence spans 218 residues: Octanoyltransferase (218 aa).

Residues 30–213 (GEIEDTLILV…YFSEVFNYDI (184 aa)) enclose the BPL/LPL catalytic domain. Substrate is bound by residues 75–82 (RGGDVTYH), 143–145 (AIG), and 156–158 (GFA). Catalysis depends on C174, which acts as the Acyl-thioester intermediate.

The protein belongs to the LipB family.

The protein localises to the cytoplasm. It catalyses the reaction octanoyl-[ACP] + L-lysyl-[protein] = N(6)-octanoyl-L-lysyl-[protein] + holo-[ACP] + H(+). Its pathway is protein modification; protein lipoylation via endogenous pathway; protein N(6)-(lipoyl)lysine from octanoyl-[acyl-carrier-protein]: step 1/2. Its function is as follows. Catalyzes the transfer of endogenously produced octanoic acid from octanoyl-acyl-carrier-protein onto the lipoyl domains of lipoate-dependent enzymes. Lipoyl-ACP can also act as a substrate although octanoyl-ACP is likely to be the physiological substrate. This Alkaliphilus metalliredigens (strain QYMF) protein is Octanoyltransferase.